We begin with the raw amino-acid sequence, 83 residues long: Hainantoxin-III 4 (83 aa).

The first 21 residues, 1–21 (MKASMYLALAGLVLLFVVGYA), serve as a signal peptide directing secretion. Residues 22–48 (SESEEKEFPRELLSKIFAVDDFKGKER) constitute a propeptide that is removed on maturation. 3 disulfides stabilise this stretch: cysteine 50/cysteine 65, cysteine 57/cysteine 70, and cysteine 64/cysteine 77. Residue leucine 81 is modified to Leucine amide.

Belongs to the neurotoxin 10 (Hwtx-1) family. 15 (Hntx-3) subfamily. As to quaternary structure, monomer. In terms of tissue distribution, expressed by the venom gland.

The protein resides in the secreted. Its function is as follows. Selective antagonist of neuronal tetrodotoxin (TTX)-sensitive voltage-gated sodium channels (IC(50)=1270 nM on Nav1.1/SCN1A, 270 nM on Nav1.2/SCN2A, 491 nM on Nav1.3/SCN3A and 232 nM on Nav1.7/SCN9A). This toxin suppress Nav1.7 current amplitude without significantly altering the activation, inactivation, and repriming kinetics. Short extreme depolarizations partially activate the toxin-bound channel, indicating voltage-dependent inhibition of this toxin. This toxin increases the deactivation of the Nav1.7 current after extreme depolarizations. The toxin-Nav1.7 complex is gradually dissociated upon prolonged strong depolarizations in a voltage-dependent manner, and the unbound toxin rebinds to Nav1.7 after a long repolarization. Moreover, analysis of chimeric channels showed that the DIIS3-S4 linker is critical for toxin binding to Nav1.7. These data are consistent with this toxin interacting with Nav1.7 site 4 and trapping the domain II voltage sensor in the closed state. In Cyriopagopus hainanus (Chinese bird spider), this protein is Hainantoxin-III 4.